A 482-amino-acid chain; its full sequence is MKFATSIVAAIATTGAAFTVIPQKLSHPSQLNALNTMGSISSITAESPKEVLSRVQDAGLTLTNPNDLYWMVDFLKEKYYDNGDYYYPIKTVCDGESIDVKFYCPFEPSLSPHYLELYGSRDERASIYETTMKKYNRINSEKTSAICTPYSSYGDTQIVAYFYSMMYYINDQTAHLKLPESEIESELIDILNDDILIYLNEFMSIFEPEDAQDLERIWDFLDFYQPYFSKVDGKIVLDEKYLVRTPSQMPLIKTICEYVSEQFAPSKNITQVIWEVVRYIKGVKDEIHIRGDKSFTLSLQEYDDFRDKVTASPMAHAVSDLTHERFSYEAYTNPAFMELENRCSEIITYFNDVCTSDRERLDEDPFNSVFILMDLDPSLNFAKSCDVVVEHAYNKMQAFLKLKEEILESASDEEERLALARMIKTREDSLIGYVLHEVCCVEDGYARDHKPLMKAFLEEEITKSLAEKVKFNPVESESVRLN.

Asn-351, Thr-355, Glu-359, and Phe-366 together coordinate Mg(2+).

This sequence belongs to the terpene synthase family. Requires Mg(2+) as cofactor.

It carries out the reaction (2E)-geranyl diphosphate + L-glutamate = N-geranyl-L-glutamate + diphosphate. It participates in secondary metabolite biosynthesis. In terms of biological role, magnesium-dependent glutamate N-prenyltransferase: part of the gene cluster that mediates the biosynthesis of domoic acid (DA) and derivatives, natural products with neurochemical activity acting as ionotropic glutamate receptor (iGluR) agonists, thus being neurotoxins causing amnesic shellfish poisoning (ASP). Catalyzes the conversion of L-glutamic acid (L-Glu) to N-geranyl-L-glutamic acid (NGG) in the presence of geranyl diphosphate (GPP). Also able to catalyze the formation of farnesyl-L-glutamate from farnesyl diphosphate (FPP). Cannot use dimethylallyl diphosphate (DMAPP) as substrate. In Pseudo-nitzschia multiseries (Marine planktonic diatom), this protein is Magnesium-dependent glutamate N-prenyltransferase.